A 198-amino-acid polypeptide reads, in one-letter code: MSRYRGPRLKIIRRLKTLPGLTSKRPKNRKDSMNRSSSRKISQYRIRLEEKQKLRFHYGLTERQLLKYVRIARRAKGSRVRSIAITEMRLDKSFSIGYGSTSGARQLVNHGHIRVNDHMVDIPSYPCKPQDVITIRDQQRLRAIIKKNIDLFQRDKLPNHLTFHSLQYKGFINQIIDSKWINLKINELLVVEYYSRQA.

The segment at 17-40 (TLPGLTSKRPKNRKDSMNRSSSRK) is disordered. The S4 RNA-binding domain occupies 88–154 (MRLDKSFSIG…IKKNIDLFQR (67 aa)).

It belongs to the universal ribosomal protein uS4 family. In terms of assembly, part of the 30S ribosomal subunit. Contacts protein S5. The interaction surface between S4 and S5 is involved in control of translational fidelity.

It is found in the plastid. It localises to the chloroplast. One of the primary rRNA binding proteins, it binds directly to 16S rRNA where it nucleates assembly of the body of the 30S subunit. Functionally, with S5 and S12 plays an important role in translational accuracy. This chain is Small ribosomal subunit protein uS4c (rps4), found in Pinus thunbergii (Japanese black pine).